Here is a 242-residue protein sequence, read N- to C-terminus: Arginine transport ATP-binding protein ArtP (242 aa).

In terms of domain architecture, ABC transporter spans 3–241; that stretch reads IQLNGINCFY…QTEAFKNYLS (239 aa). 35 to 42 serves as a coordination point for ATP; it reads GPSGAGKS.

Belongs to the ABC transporter superfamily. The complex is composed of two ATP-binding proteins (ArtP), two transmembrane proteins (ArtM and ArtQ) and two solute-binding proteins (ArtJ and ArtI).

The protein localises to the cell inner membrane. It carries out the reaction a polar amino acid(out) + ATP + H2O = a polar amino acid(in) + ADP + phosphate + H(+). The enzyme catalyses L-arginine(out) + ATP + H2O = L-arginine(in) + ADP + phosphate + H(+). In terms of biological role, part of the ABC transporter complex ArtPIQMJ involved in arginine transport. Probably responsible for energy coupling to the transport system. The polypeptide is Arginine transport ATP-binding protein ArtP (artP) (Escherichia coli O157:H7).